The following is a 1125-amino-acid chain: MASEEASLRALESLMTEFFHDCTTNERKREIEELLNNFAQQVGAWRFCLYFLSSTRNDYVMMYSLTVFENLINKMWLGVPSQDKMEIRSCLPKLLLAHHKTLPYFIRNKLCKVIVDIGRQDWPMFYHDFFTNILQLIQSPVTTPLGLIMLKTTSEELACPREDLSVARKEELRKLLLDQVQTVLGLLTGILETVWDKHSVTAATPPPSPTSGESGDLLSNLLQSPSSAKLLHQPIPILDVESEYVCSLALECLAHLFSWIPLSASITPSLLTTIFHFARFGCDTRARKMASVNGSSQNCVLGQERGRLGVLAMSCINELMSKNCVPMEFEEYLLRMFQQTFYLLQKITKDNNAHTVKSRLEELDESYIEKFTDFLRLFVSVHLRRIESYSQFPVVEFLTLLFKYTFHQPTHEGYFSCLDIWTLFLDYLTSKIKSRLGDKEAVLNRYEDALVLLLTEVLNRIQFRYNQAQLEELDDETLDDDQQTEWQRYLRQSLEVVAKVMELLPTHAFSTLFPVLQDNLEVYLGLQQFVVTSGSGHRLNITAENDCRRLHCSLRDLSSLLQAVGRLAEYFIGDVFAARFNDALTVVERLVKVTLYGSQIKLYNIETAVPSVLKPDLIDVHAQSLAALQAYSHWLAQYCGEAHRQNTQQFVTLISTTMDAITPLISTKVQDKLLLSACHLLVSLATTVRPVFLISIPAVQKVFNSIIDASAQRLTDKAQVLVCRALSNTLLLPWPNLPESEQQWPLRSINHASLISALSRDYHSLKPSATAPQRKVPLGDTKVIIHQTLSVLEDIVENISGESTKSRQICYQSLQESVQVSLALFPAFIHQSDVTDEMLSFFLTLFRGLRVQMGVPFTEQIIQTFLNMFTREQLAESILHEGSTGCRVVEKFLKILQVVVQEPGQVFKPFLPSIIALCMEQVYPIIAERPSPDVKAELFELLFRTLHHNWRYFFKSTVLASVQRGIAEEQMENEPQFSAIMQAFGQSFLQPDIHLFKQNLFYLETLNTKQKLYHKKIFRTTMLFQFVNVLLQVLVHKSHDLLQEEIGIAIYNMASVDFDGFFAAFLPEFLTSCDGVDANQKNVLGRNFKMDRDLPSFTQNVHRLVNDLRYYRLCNDSLPPGTVKL.

Ala2 bears the N-acetylalanine mark. The 67-residue stretch at 31 to 97 (IEELLNNFAQ…RSCLPKLLLA (67 aa)) folds into the Importin N-terminal domain. Ser199 carries the phosphoserine modification. Thr201 and Thr204 each carry phosphothreonine. A phosphoserine mark is found at Ser208 and Ser224.

Belongs to the exportin family. As to quaternary structure, found in a complex with XPO6, Ran, ACTB and PFN1. Interacts with ACTB. Interacts with ACTB in a RanGTP-dependent manner.

The protein resides in the nucleus. It localises to the cytoplasm. In terms of biological role, mediates the nuclear export of actin and profilin-actin complexes in somatic cells. The protein is Exportin-6 (Xpo6) of Mus musculus (Mouse).